The primary structure comprises 264 residues: Thymidylate synthase (264 aa).

Arginine 21 serves as a coordination point for dUMP. Histidine 51 provides a ligand contact to (6R)-5,10-methylene-5,6,7,8-tetrahydrofolate. 126-127 (RR) is a binding site for dUMP. Cysteine 146 serves as the catalytic Nucleophile. Residues 166-169 (RSCD), asparagine 177, and 207-209 (HLY) each bind dUMP. Aspartate 169 contacts (6R)-5,10-methylene-5,6,7,8-tetrahydrofolate. Serine 263 serves as a coordination point for (6R)-5,10-methylene-5,6,7,8-tetrahydrofolate.

Belongs to the thymidylate synthase family. Bacterial-type ThyA subfamily. As to quaternary structure, homodimer.

The protein localises to the cytoplasm. The catalysed reaction is dUMP + (6R)-5,10-methylene-5,6,7,8-tetrahydrofolate = 7,8-dihydrofolate + dTMP. The protein operates within pyrimidine metabolism; dTTP biosynthesis. Catalyzes the reductive methylation of 2'-deoxyuridine-5'-monophosphate (dUMP) to 2'-deoxythymidine-5'-monophosphate (dTMP) while utilizing 5,10-methylenetetrahydrofolate (mTHF) as the methyl donor and reductant in the reaction, yielding dihydrofolate (DHF) as a by-product. This enzymatic reaction provides an intracellular de novo source of dTMP, an essential precursor for DNA biosynthesis. The sequence is that of Thymidylate synthase from Buchnera aphidicola subsp. Acyrthosiphon pisum (strain APS) (Acyrthosiphon pisum symbiotic bacterium).